Here is a 418-residue protein sequence, read N- to C-terminus: Arginine deiminase (418 aa).

Residue Cys406 is the Amidino-cysteine intermediate of the active site.

Belongs to the arginine deiminase family.

The protein localises to the cytoplasm. It carries out the reaction L-arginine + H2O = L-citrulline + NH4(+). It functions in the pathway amino-acid degradation; L-arginine degradation via ADI pathway; carbamoyl phosphate from L-arginine: step 1/2. This Lentilactobacillus hilgardii (Lactobacillus hilgardii) protein is Arginine deiminase.